The chain runs to 208 residues: 3-demethoxyubiquinol 3-hydroxylase (208 aa).

6 residues coordinate Fe cation: Glu57, Glu87, His90, Glu139, Glu171, and His174.

This sequence belongs to the COQ7 family. Requires Fe cation as cofactor.

The protein resides in the cell membrane. It catalyses the reaction a 5-methoxy-2-methyl-3-(all-trans-polyprenyl)benzene-1,4-diol + AH2 + O2 = a 3-demethylubiquinol + A + H2O. It participates in cofactor biosynthesis; ubiquinone biosynthesis. Functionally, catalyzes the hydroxylation of 2-nonaprenyl-3-methyl-6-methoxy-1,4-benzoquinol during ubiquinone biosynthesis. The sequence is that of 3-demethoxyubiquinol 3-hydroxylase from Verminephrobacter eiseniae (strain EF01-2).